Consider the following 1323-residue polypeptide: Glutamate receptor ionotropic, NMDA 2D (1323 aa).

The signal sequence occupies residues 1-27; that stretch reads MRGAGGPRGPRGPAKMLLLLALACASP. Residues 28–579 are Extracellular-facing; that stretch reads FPEEVPGPGA…SPSAFLEPYS (552 aa). An N-linked (GlcNAc...) asparagine glycan is attached at Asn89. A disulfide bond links Cys101 and Cys345. 4 N-linked (GlcNAc...) asparagine glycosylation sites follow: Asn349, Asn363, Asn381, and Asn464. 2 disulfides stabilise this stretch: Cys452/Cys480 and Cys459/Cys481. Ser536, Thr538, and Arg543 together coordinate L-glutamate. A glycan (N-linked (GlcNAc...) asparagine) is linked at Asn566. Residues 580–601 form a helical membrane-spanning segment; the sequence is PAVWVMMFVMCLTVVAVTVFIF. At 602 to 626 the chain is on the cytoplasmic side; it reads EYLSPVGYNRSLATGKRPGGSTFTI. An intramembrane region (discontinuously helical) is located at residues 627–638; that stretch reads GKSIWLLWALVF. The interval 628–647 is pore-forming; sequence KSIWLLWALVFNNSVPVENP. Residues 639 to 650 lie on the Cytoplasmic side of the membrane; the sequence is NNSVPVENPRGT. The chain crosses the membrane as a helical span at residues 651–671; sequence TSKIMVLVWAFFAVIFLASYT. The Extracellular segment spans residues 672–840; sequence ANLAAFMIQE…EVMSSKLDID (169 aa). A glycan (N-linked (GlcNAc...) asparagine) is linked at Asn712. 3 residues coordinate L-glutamate: Ser714, Thr715, and Asp756. A disulfide bond links Cys770 and Cys825. Residues 841-864 form a helical membrane-spanning segment; that stretch reads NMAGVFYMLLVAMGLSLLVFAWEH. Residues 865-1323 are Cytoplasmic-facing; sequence LVYWRLRHCL…AHFSSLESEV (459 aa). Disordered regions lie at residues 897–952, 977–1112, and 1201–1323; these read EAAP…PGGA, AAPR…SLGG, and PWAA…ESEV. Positions 899–929 are enriched in pro residues; the sequence is APPPAKPPPPPQPLPSPAYPAARPPPGPAPF. Positions 931 to 940 are enriched in basic and acidic residues; sequence PRERAAADRW. Residues 977-986 are compositionally biased toward low complexity; it reads AAPRGAAGRP. Residues 987 to 1001 are compositionally biased toward pro residues; that stretch reads LSPPTTQPPQKPPPS. The span at 1030 to 1039 shows a compositional bias: low complexity; sequence AAAAAAVGPP. Pro residues predominate over residues 1080-1092; the sequence is TAPPPRRAAPPPC. A compositionally biased stretch (basic residues) spans 1208–1228; it reads PRRRARCGCPRPHPHRPRASH. Residue Arg1303 is modified to Omega-N-methylarginine. A Phosphoserine modification is found at Ser1313. A PDZ-binding motif is present at residues 1321–1323; sequence SEV.

This sequence belongs to the glutamate-gated ion channel (TC 1.A.10.1) family. NR2D/GRIN2D subfamily. In terms of assembly, heterotetramer. Forms heterotetrameric channels composed of two GluN1/zeta subunits (GRIN1), and two identical GluN2/epsilon subunits (GRIN2A, GRIN2B, GRIN2C or GRIN2D) or GluN3 subunits (GRIN3A or GRIN3B) (in vitro). In vivo, the subunit composition may depend on the expression levels of the different subunits. Interacts with PDZ domains of PATJ and DLG4. Detected in neonate brain synaptosomes (at protein level).

It localises to the cell membrane. It is found in the postsynaptic cell membrane. It carries out the reaction Ca(2+)(in) = Ca(2+)(out). The catalysed reaction is Na(+)(in) = Na(+)(out). It catalyses the reaction K(+)(in) = K(+)(out). Component of N-methyl-D-aspartate (NMDA) receptors (NMDARs) that function as heterotetrameric, ligand-gated cation channels with high calcium permeability and voltage-dependent block by Mg(2+). Participates in synaptic plasticity for learning and memory formation. Channel activation requires binding of the neurotransmitter L-glutamate to the GluN2 subunit, glycine or D-serine binding to the GluN1 subunit, plus membrane depolarization to eliminate channel inhibition by Mg(2+). NMDARs mediate simultaneously the potasium efflux and the influx of calcium and sodium. Each GluN2 subunit confers differential attributes to channel properties, including activation, deactivation and desensitization kinetics, pH sensitivity, Ca2(+) permeability, and binding to allosteric modulators. This chain is Glutamate receptor ionotropic, NMDA 2D, found in Mus musculus (Mouse).